The sequence spans 415 residues: Serine hydroxymethyltransferase (415 aa).

(6S)-5,6,7,8-tetrahydrofolate-binding positions include Leu-122 and 126–128 (GHL). N6-(pyridoxal phosphate)lysine is present on Lys-230.

Belongs to the SHMT family. In terms of assembly, homodimer. Pyridoxal 5'-phosphate serves as cofactor.

It localises to the cytoplasm. The enzyme catalyses (6R)-5,10-methylene-5,6,7,8-tetrahydrofolate + glycine + H2O = (6S)-5,6,7,8-tetrahydrofolate + L-serine. Its pathway is one-carbon metabolism; tetrahydrofolate interconversion. It participates in amino-acid biosynthesis; glycine biosynthesis; glycine from L-serine: step 1/1. Catalyzes the reversible interconversion of serine and glycine with tetrahydrofolate (THF) serving as the one-carbon carrier. This reaction serves as the major source of one-carbon groups required for the biosynthesis of purines, thymidylate, methionine, and other important biomolecules. Also exhibits THF-independent aldolase activity toward beta-hydroxyamino acids, producing glycine and aldehydes, via a retro-aldol mechanism. This Cupriavidus taiwanensis (strain DSM 17343 / BCRC 17206 / CCUG 44338 / CIP 107171 / LMG 19424 / R1) (Ralstonia taiwanensis (strain LMG 19424)) protein is Serine hydroxymethyltransferase.